Here is a 75-residue protein sequence, read N- to C-terminus: ATP synthase subunit c (75 aa).

2 helical membrane-spanning segments follow: residues 8 to 28 (FIAI…IANI) and 52 to 72 (IGAA…MLLI).

It belongs to the ATPase C chain family. In terms of assembly, F-type ATPases have 2 components, F(1) - the catalytic core - and F(0) - the membrane proton channel. F(1) has five subunits: alpha(3), beta(3), gamma(1), delta(1), epsilon(1). F(0) has three main subunits: a(1), b(2) and c(10-14). The alpha and beta chains form an alternating ring which encloses part of the gamma chain. F(1) is attached to F(0) by a central stalk formed by the gamma and epsilon chains, while a peripheral stalk is formed by the delta and b chains.

It is found in the cell membrane. F(1)F(0) ATP synthase produces ATP from ADP in the presence of a proton or sodium gradient. F-type ATPases consist of two structural domains, F(1) containing the extramembraneous catalytic core and F(0) containing the membrane proton channel, linked together by a central stalk and a peripheral stalk. During catalysis, ATP synthesis in the catalytic domain of F(1) is coupled via a rotary mechanism of the central stalk subunits to proton translocation. Its function is as follows. Key component of the F(0) channel; it plays a direct role in translocation across the membrane. A homomeric c-ring of between 10-14 subunits forms the central stalk rotor element with the F(1) delta and epsilon subunits. The chain is ATP synthase subunit c from Wolbachia pipientis wMel.